Consider the following 111-residue polypeptide: ASFBZAPAGBSASGEKIFKTKCAZCHTVBZGAGHKZGPNLHGLFGRQSGTVAGYSYSAANKNKAVNWEEKTLYDYLLNPKKYIPGTKMVFPGLKKPZZRABLLAYLKESTA.

A1 carries the N-acetylalanine modification. Positions 22, 25, and 26 each coordinate heme c. K80 carries the N6,N6,N6-trimethyllysine modification. Position 88 (M88) interacts with heme c. Residue K94 is modified to N6,N6,N6-trimethyllysine.

Belongs to the cytochrome c family. Binds 1 heme c group covalently per subunit.

Its subcellular location is the mitochondrion intermembrane space. Functionally, electron carrier protein. The oxidized form of the cytochrome c heme group can accept an electron from the heme group of the cytochrome c1 subunit of cytochrome reductase. Cytochrome c then transfers this electron to the cytochrome oxidase complex, the final protein carrier in the mitochondrial electron-transport chain. This Nigella damascena (Love-in-a-mist) protein is Cytochrome c.